The primary structure comprises 119 residues: MRIALIAHDKKKQDIIEFAKRNKETLEKYELLATGTTGKMISEETGLNIKRYLSGPYGGDQQIGGRIAEGTIGLVIFFRDPLTAQPHEPDVSALLRVCDVHNIPVVTNSGTADLIIRQF.

Residues 1 to 119 (MRIALIAHDK…GTADLIIRQF (119 aa)) form the MGS-like domain. Substrate contacts are provided by residues His8, Lys12, 34–37 (TGTT), and 54–55 (SG). Catalysis depends on Asp60, which acts as the Proton donor/acceptor. His87 contacts substrate.

It belongs to the methylglyoxal synthase family.

The catalysed reaction is dihydroxyacetone phosphate = methylglyoxal + phosphate. Functionally, catalyzes the formation of methylglyoxal from dihydroxyacetone phosphate. This is Methylglyoxal synthase from Clostridium botulinum (strain Alaska E43 / Type E3).